Here is a 491-residue protein sequence, read N- to C-terminus: Probable diguanylate cyclase CdgI (491 aa).

Residues 1-54 (MIQSTRISMGLFFKYFLSLTKIDPGQNYISLPSIKSSTHIALLFMVSMGTQKLK) lie on the Cytoplasmic side of the membrane. A helical membrane pass occupies residues 55 to 75 (AQSFFIFSLLLTLILFCITTL). Residues 76–89 (YNENTNVKLIPQMN) are Periplasmic-facing. A helical membrane pass occupies residues 90-110 (YLMVVVALFFLNAVIFLFMLM). The Cytoplasmic segment spans residues 111–121 (KYFTNKQILPT). Residues 122 to 142 (LILSLAFLSGLIYLVETIVII) traverse the membrane as a helical segment. Residues 143–158 (HKPINGSTLIQTKSND) are Periplasmic-facing. Residues 159-179 (VSIFYIFRQLSFICLTSLALF) form a helical membrane-spanning segment. At 180 to 193 (CYGKDNILDNNKKK) the chain is on the cytoplasmic side. The chain crosses the membrane as a helical span at residues 194 to 214 (TGILLLALIPFLVFPLLAHNL). The Periplasmic portion of the chain corresponds to 215–236 (SSYNADYSLYVVDYCPDNHTAT). Residues 237-257 (WGINYTKILVCLWAFLLFFII) form a helical membrane-spanning segment. Residues 258-265 (MRTRLASE) are Cytoplasmic-facing. A helical transmembrane segment spans residues 266–286 (LWPLIALLCLASLCCNLLLLT). The Periplasmic segment spans residues 287–293 (LDEYNYT). The chain crosses the membrane as a helical span at residues 294–314 (IWYISRGIEVSSKLFVVSFLI). At 315 to 491 (YNIFQELQLS…GGNKVIIHHI (177 aa)) the chain is on the cytoplasmic side. Residues 356–491 (KDFCVMLVDI…GGNKVIIHHI (136 aa)) form the GGDEF domain. Mg(2+)-binding residues include aspartate 364 and isoleucine 365. Substrate-binding residues include asparagine 372, histidine 377, and aspartate 381. Glutamate 407 contacts Mg(2+). The active-site Proton acceptor is glutamate 407. Residue arginine 427 coordinates substrate.

As to quaternary structure, homodimer. The cofactor is Mg(2+).

Its subcellular location is the cell inner membrane. It catalyses the reaction 2 GTP = 3',3'-c-di-GMP + 2 diphosphate. Its pathway is purine metabolism; 3',5'-cyclic di-GMP biosynthesis. In terms of biological role, catalyzes the synthesis of cyclic-di-GMP (c-di-GMP) via the condensation of 2 GTP molecules. The sequence is that of Probable diguanylate cyclase CdgI from Escherichia coli (strain K12).